We begin with the raw amino-acid sequence, 301 residues long: Nitric oxide synthase-interacting protein (301 aa).

Ser36 is subject to Phosphoserine. The interval 55-75 (DPVVTPDGYLYEREAILEYIL) is U-box-like. Residues 78–101 (KKEIARQMKAYEKQRGTRREEQKE) carry the Nuclear localization signal motif. At Ser107 the chain carries Phosphoserine. Residues 132 to 157 (KALSGTSPDDVQPGPSVGPPSKDKDK) form a disordered region.

This sequence belongs to the NOSIP family. As to quaternary structure, interacts with NOS1 and NOS3. Interacts with PP2A holoenzyme, containing PPP2CA, PPP2CB, PPP2R1A and PPP2R2A subunits. In terms of tissue distribution, expressed in heart, brain and lung. Present in endothelial cells (at protein level).

It localises to the cytoplasm. It is found in the nucleus. The enzyme catalyses S-ubiquitinyl-[E2 ubiquitin-conjugating enzyme]-L-cysteine + [acceptor protein]-L-lysine = [E2 ubiquitin-conjugating enzyme]-L-cysteine + N(6)-ubiquitinyl-[acceptor protein]-L-lysine.. Its function is as follows. E3 ubiquitin-protein ligase that is essential for proper development of the forebrain, the eye, and the face. Catalyzes monoubiquitination of serine/threonine-protein phosphatase 2A (PP2A) catalytic subunit PPP2CA/PPP2CB. Negatively regulates nitric oxide production by inducing NOS1 and NOS3 translocation to actin cytoskeleton and inhibiting their enzymatic activity. The chain is Nitric oxide synthase-interacting protein (NOSIP) from Homo sapiens (Human).